We begin with the raw amino-acid sequence, 305 residues long: uncharacterized protein (305 aa).

This is an uncharacterized protein from Sinorhizobium fredii (strain NBRC 101917 / NGR234).